We begin with the raw amino-acid sequence, 367 residues long: MTSRNYLLLTPGPLTTSRTVKEAMLFDSCTWDDDYNIGVVEQIRQQLTELATASEGYTSVLLQGSGSYAVEAVLGSALGPQDKVLIVSNGAYGARMVEMAGLMGIAHHAYDCGEVARPDVQAIDAILNADPTISHIAMVHSETTTGMLNPIDEVGALAHRYGKTYIVDAMSSFGGIPMDIAALHIDYLISSANKCIQGVPGFAFVIAREQKLAACKGHSRSLSLDLYAQWRCMEDNHGKWRFTSPTHTVLAFAQALKELAKEGGVAARHQRYQQNQRSLVAGMRALGFNTLLDDELHSPIITAFYSPEDPQYRFSEFYRRLKEQGFVIYPGKVSQSDCFRIGNIGEVYAADITALLTAIRTAMYWMK.

The residue at position 194 (K194) is an N6-(pyridoxal phosphate)lysine.

The protein belongs to the class-V pyridoxal-phosphate-dependent aminotransferase family. PhnW subfamily. As to quaternary structure, homodimer. Pyridoxal 5'-phosphate serves as cofactor.

The catalysed reaction is (2-aminoethyl)phosphonate + pyruvate = phosphonoacetaldehyde + L-alanine. Functionally, involved in phosphonate degradation. This Salmonella heidelberg (strain SL476) protein is 2-aminoethylphosphonate--pyruvate transaminase.